A 128-amino-acid chain; its full sequence is UPF0102 protein Acry_2261 (128 aa).

It belongs to the UPF0102 family.

The chain is UPF0102 protein Acry_2261 from Acidiphilium cryptum (strain JF-5).